The chain runs to 401 residues: Nodal homolog 3-B (401 aa).

Residues 1–18 form the signal peptide; it reads MALLNLFFCLVFSSPLMA. The propeptide occupies 19–274; that stretch reads MPPVLQGRKS…KVNGFRRLRR (256 aa). N-linked (GlcNAc...) asparagine glycans are attached at residues asparagine 168, asparagine 337, asparagine 341, and asparagine 344. 2 disulfide bridges follow: cysteine 299-cysteine 365 and cysteine 328-cysteine 396.

Belongs to the TGF-beta family. Monomer. The propeptide region interacts with bmp4 in a non-covalent manner. In terms of tissue distribution, expressed in the dorsal marginal region of late blastula, becoming restricted to the dorsal blastopore lip (Spemann organizer) at the early gastrula stage.

It is found in the secreted. Its function is as follows. Exhibits mesoderm-dorsalizing activity and neural-inducing activity, but lacks mesoderm-inducing activity. Regulates the expression of specific mesodermal and neural genes. Induces convergent extension movements at the embryonic midline by activating the fgf signaling pathway to induce t/bra expression in the organizer region. Acts with wnt11 to induce Spemann organizer cells and induce axis formation. The unprocessed protein antagonizes bmp-signaling. This chain is Nodal homolog 3-B (nodal3-b), found in Xenopus laevis (African clawed frog).